Reading from the N-terminus, the 83-residue chain is Small ribosomal subunit protein bS16 (83 aa).

It belongs to the bacterial ribosomal protein bS16 family.

The polypeptide is Small ribosomal subunit protein bS16 (Syntrophus aciditrophicus (strain SB)).